The following is a 158-amino-acid chain: Cytochrome b6-f complex subunit 4 (158 aa).

3 helical membrane passes run 34–54 (LLYISPVVILGTIACNVGLAV), 93–113 (LLGVLLMVSVPTGLLTVPFLE), and 129–149 (TVFLIGTVIALWLGIGATLPI).

This sequence belongs to the cytochrome b family. PetD subfamily. As to quaternary structure, the 4 large subunits of the cytochrome b6-f complex are cytochrome b6, subunit IV (17 kDa polypeptide, petD), cytochrome f and the Rieske protein, while the 4 small subunits are petG, petL, petM and petN. The complex functions as a dimer.

It localises to the plastid. It is found in the chloroplast thylakoid membrane. Component of the cytochrome b6-f complex, which mediates electron transfer between photosystem II (PSII) and photosystem I (PSI), cyclic electron flow around PSI, and state transitions. The polypeptide is Cytochrome b6-f complex subunit 4 (Liriodendron tulipifera (Tuliptree)).